A 161-amino-acid chain; its full sequence is Regulator of ribonuclease activity A (161 aa).

The protein belongs to the RraA family. Homotrimer. Binds to both RNA-binding sites in the C-terminal region of Rne and to RhlB.

The protein localises to the cytoplasm. In terms of biological role, globally modulates RNA abundance by binding to RNase E (Rne) and regulating its endonucleolytic activity. Can modulate Rne action in a substrate-dependent manner by altering the composition of the degradosome. Modulates RNA-binding and helicase activities of the degradosome. The polypeptide is Regulator of ribonuclease activity A (Pectobacterium atrosepticum (strain SCRI 1043 / ATCC BAA-672) (Erwinia carotovora subsp. atroseptica)).